We begin with the raw amino-acid sequence, 341 residues long: MIELKEVVKEYRTKNKEVLAVDHVNLSIRAGSIYGVIGFSGAGKSTLIRMFNHLEAPTSGEVIIDGDHIGQLSKNGLRAKRQKVNMIFQHFNLLWSRTVLKNIMFPLEIAGVPRRRAKQKALELVELVGLKGREKAYPSELSGGQKQRVGIARALANDPTVLLCDEATSALDPQTTDEILDLLLKIREQQNLTIVLITHEMHVIRRICDEVAVMESGKVIEHGPVTQVFENPQHTVTKRFVKEDLNDDFETSLTELEPLEKDAYIVRLVFAGSTTTEPIVSSLSTAYDIKINILEANIKNTKNGTVGFLVLHIPYISSVDFGKFEKELIERQVKMEVLRHG.

In terms of domain architecture, ABC transporter spans 2–241 (IELKEVVKEY…PQHTVTKRFV (240 aa)). 38–45 (GFSGAGKS) contributes to the ATP binding site.

It belongs to the ABC transporter superfamily. Methionine importer (TC 3.A.1.24) family. As to quaternary structure, the complex is composed of two ATP-binding proteins (MetN), two transmembrane proteins (MetI) and a solute-binding protein (MetQ).

Its subcellular location is the cell membrane. It carries out the reaction L-methionine(out) + ATP + H2O = L-methionine(in) + ADP + phosphate + H(+). The catalysed reaction is D-methionine(out) + ATP + H2O = D-methionine(in) + ADP + phosphate + H(+). Functionally, part of the ABC transporter complex MetNIQ involved in methionine import. Responsible for energy coupling to the transport system. This Staphylococcus aureus (strain N315) protein is Methionine import ATP-binding protein MetN 2.